We begin with the raw amino-acid sequence, 376 residues long: PqqA peptide cyclase (376 aa).

The Radical SAM core domain occupies 4–219; sequence VPPPLSVLLE…VETARRSLGD (216 aa). [4Fe-4S] cluster-binding residues include Cys18, Cys22, and Cys25.

The protein belongs to the radical SAM superfamily. PqqE family. As to quaternary structure, interacts with PqqD. The interaction is necessary for activity of PqqE. Requires [4Fe-4S] cluster as cofactor.

The enzyme catalyses [PQQ precursor protein] + S-adenosyl-L-methionine = E-Y cross-linked-[PQQ precursor protein] + 5'-deoxyadenosine + L-methionine + H(+). It participates in cofactor biosynthesis; pyrroloquinoline quinone biosynthesis. Its function is as follows. Catalyzes the cross-linking of a glutamate residue and a tyrosine residue in the PqqA protein as part of the biosynthesis of pyrroloquinoline quinone (PQQ). The polypeptide is PqqA peptide cyclase (Xanthomonas campestris pv. campestris (strain 8004)).